A 151-amino-acid chain; its full sequence is Methylglyoxal synthase (151 aa).

The MGS-like domain occupies 6–151; sequence RTMPAHKHVA…DYDAYLAERT (146 aa). Substrate contacts are provided by residues His19, Lys23, 45–48, and 65–66; these read TGTT and SG. Asp71 (proton donor/acceptor) is an active-site residue. Substrate is bound at residue His98.

It belongs to the methylglyoxal synthase family.

The enzyme catalyses dihydroxyacetone phosphate = methylglyoxal + phosphate. Its function is as follows. Catalyzes the formation of methylglyoxal from dihydroxyacetone phosphate. This is Methylglyoxal synthase from Vibrio campbellii (strain ATCC BAA-1116).